Reading from the N-terminus, the 124-residue chain is Ribonuclease pancreatic (124 aa).

Over residues Lys-1–Met-13 the composition is skewed to basic and acidic residues. The tract at residues Lys-1 to Ser-22 is disordered. The substrate site is built by Lys-7 and Arg-10. Catalysis depends on His-12, which acts as the Proton acceptor. Cystine bridges form between Cys-26–Cys-84, Cys-40–Cys-95, Cys-58–Cys-110, and Cys-65–Cys-72. Asn-34 carries an N-linked (GlcNAc...) asparagine glycan. Residues Lys-41 to Thr-45, Lys-66, and Arg-85 each bind substrate. Catalysis depends on His-119, which acts as the Proton donor.

This sequence belongs to the pancreatic ribonuclease family. In terms of assembly, monomer. Interacts with and forms tight 1:1 complexes with RNH1. Dimerization of two such complexes may occur. Interaction with RNH1 inhibits this protein. As to expression, pancreas.

It localises to the secreted. It carries out the reaction an [RNA] containing cytidine + H2O = an [RNA]-3'-cytidine-3'-phosphate + a 5'-hydroxy-ribonucleotide-3'-[RNA].. The catalysed reaction is an [RNA] containing uridine + H2O = an [RNA]-3'-uridine-3'-phosphate + a 5'-hydroxy-ribonucleotide-3'-[RNA].. In terms of biological role, endonuclease that catalyzes the cleavage of RNA on the 3' side of pyrimidine nucleotides. Acts on single-stranded and double-stranded RNA. The protein is Ribonuclease pancreatic (RNASE1) of Bison bison (American bison).